The primary structure comprises 305 residues: Cysteine synthase (305 aa).

Position 45 is an N6-(pyridoxal phosphate)lysine (K45). Residues N75, 179 to 183 (GSGGT), and S266 each bind pyridoxal 5'-phosphate.

This sequence belongs to the cysteine synthase/cystathionine beta-synthase family. In terms of assembly, homodimer. Pyridoxal 5'-phosphate is required as a cofactor.

The catalysed reaction is O-acetyl-L-serine + hydrogen sulfide = L-cysteine + acetate. It functions in the pathway amino-acid biosynthesis; L-cysteine biosynthesis; L-cysteine from L-serine: step 2/2. This is Cysteine synthase (cysM) from Helicobacter pylori (strain J99 / ATCC 700824) (Campylobacter pylori J99).